The following is a 94-amino-acid chain: Phosphoribosyl-ATP pyrophosphatase (94 aa).

It belongs to the PRA-PH family.

It localises to the cytoplasm. It catalyses the reaction 1-(5-phospho-beta-D-ribosyl)-ATP + H2O = 1-(5-phospho-beta-D-ribosyl)-5'-AMP + diphosphate + H(+). Its pathway is amino-acid biosynthesis; L-histidine biosynthesis; L-histidine from 5-phospho-alpha-D-ribose 1-diphosphate: step 2/9. This is Phosphoribosyl-ATP pyrophosphatase from Saccharolobus islandicus (strain Y.N.15.51 / Yellowstone #2) (Sulfolobus islandicus).